The primary structure comprises 232 residues: Ubiquitin-conjugating enzyme E2-24 kDa (232 aa).

The segment covering 1-37 (MSSTPAAGSAAEVATSSATSNAPSAPSTTASNVSNTS) has biased composition (low complexity). Positions 1 to 87 (MSSTPAAGSA…PRISRALGTS (87 aa)) are disordered. The span at 58–67 (GASGSNAGGG) shows a compositional bias: gly residues. Residues 86-232 (TSAKRIQKEL…ARLWTKRYAT (147 aa)) form the UBC core domain. The Glycyl thioester intermediate role is filled by Cys170.

This sequence belongs to the ubiquitin-conjugating enzyme family.

It carries out the reaction S-ubiquitinyl-[E1 ubiquitin-activating enzyme]-L-cysteine + [E2 ubiquitin-conjugating enzyme]-L-cysteine = [E1 ubiquitin-activating enzyme]-L-cysteine + S-ubiquitinyl-[E2 ubiquitin-conjugating enzyme]-L-cysteine.. Its pathway is protein modification; protein ubiquitination. Its function is as follows. Catalyzes the covalent attachment of ubiquitin to other proteins. The chain is Ubiquitin-conjugating enzyme E2-24 kDa from Drosophila melanogaster (Fruit fly).